Consider the following 480-residue polypeptide: UDP-glycosyltransferase 708D1 (480 aa).

His-20 functions as the Proton acceptor in the catalytic mechanism. An an anthocyanidin-binding site is contributed by His-20. The active-site Charge relay is Asp-118. Thr-141 is a UDP-alpha-D-glucose binding site. The UDP stretch occupies residues 291–292 (NR). Residues Val-354, Gln-356, His-371, Trp-374, Asn-375, Ser-376, Glu-379, Asp-395, and Gln-396 each coordinate UDP-alpha-D-glucose.

Belongs to the UDP-glycosyltransferase family.

The enzyme catalyses a 3'-hydro-2'-hydroxy-beta-oxodihydrochalcone + UDP-alpha-D-glucose = a 3'-(beta-D-glucopyranosyl)-2'-hydroxy-beta-oxodihydrochalcone + UDP + H(+). Functionally, UDP-glucose-dependent glucosyltransferase catalyzing the c-glucosylation of the A ring of 2-hydroxynaringenin. Also active toward phloretin, but not toward naringenin and apigenin. This chain is UDP-glycosyltransferase 708D1, found in Glycine max (Soybean).